The sequence spans 777 residues: Elongation factor G, mitochondrial (777 aa).

The region spanning 34-338 (LRQRNVGISA…GMCAYLPNPM (305 aa)) is the tr-type G domain. GTP contacts are provided by residues 43-50 (AHIDSGKT), 136-140 (DTPGH), and 190-193 (NKMD).

Belongs to the TRAFAC class translation factor GTPase superfamily. Classic translation factor GTPase family. EF-G/EF-2 subfamily.

It localises to the mitochondrion. It functions in the pathway protein biosynthesis; polypeptide chain elongation. In terms of biological role, mitochondrial GTPase that catalyzes the GTP-dependent ribosomal translocation step during translation elongation. During this step, the ribosome changes from the pre-translocational (PRE) to the post-translocational (POST) state as the newly formed A-site-bound peptidyl-tRNA and P-site-bound deacylated tRNA move to the P and E sites, respectively. Catalyzes the coordinated movement of the two tRNA molecules, the mRNA and conformational changes in the ribosome. The chain is Elongation factor G, mitochondrial from Malassezia globosa (strain ATCC MYA-4612 / CBS 7966) (Dandruff-associated fungus).